Reading from the N-terminus, the 381-residue chain is 3-isopropylmalate dehydrogenase (381 aa).

Substrate contacts are provided by arginine 104, arginine 114, arginine 142, and aspartate 232. Residues aspartate 232, aspartate 256, and aspartate 260 each coordinate Mg(2+). 290–302 (GSAPDIAGQDKAN) is an NAD(+) binding site.

This sequence belongs to the isocitrate and isopropylmalate dehydrogenases family. LeuB type 1 subfamily. In terms of assembly, homodimer. It depends on Mg(2+) as a cofactor. Requires Mn(2+) as cofactor.

Its subcellular location is the cytoplasm. It catalyses the reaction (2R,3S)-3-isopropylmalate + NAD(+) = 4-methyl-2-oxopentanoate + CO2 + NADH. The protein operates within amino-acid biosynthesis; L-leucine biosynthesis; L-leucine from 3-methyl-2-oxobutanoate: step 3/4. Functionally, catalyzes the oxidation of 3-carboxy-2-hydroxy-4-methylpentanoate (3-isopropylmalate) to 3-carboxy-4-methyl-2-oxopentanoate. The product decarboxylates to 4-methyl-2 oxopentanoate. The chain is 3-isopropylmalate dehydrogenase from Synechococcus sp. (strain JA-3-3Ab) (Cyanobacteria bacterium Yellowstone A-Prime).